A 127-amino-acid polypeptide reads, in one-letter code: Small ribosomal subunit protein uS11 (127 aa).

Belongs to the universal ribosomal protein uS11 family. Part of the 30S ribosomal subunit. Interacts with proteins S7 and S18. Binds to IF-3.

Located on the platform of the 30S subunit, it bridges several disparate RNA helices of the 16S rRNA. Forms part of the Shine-Dalgarno cleft in the 70S ribosome. The sequence is that of Small ribosomal subunit protein uS11 from Ehrlichia ruminantium (strain Gardel).